The chain runs to 138 residues: Aspartate 1-decarboxylase (138 aa).

Ser25 acts as the Schiff-base intermediate with substrate; via pyruvic acid in catalysis. Ser25 is subject to Pyruvic acid (Ser). Residue Thr57 participates in substrate binding. Catalysis depends on Tyr58, which acts as the Proton donor. 73 to 75 (GAA) contributes to the substrate binding site. The tract at residues 117 to 138 (VDADPTAPPAPGLERSPLAEPV) is disordered.

This sequence belongs to the PanD family. As to quaternary structure, heterooctamer of four alpha and four beta subunits. Requires pyruvate as cofactor. In terms of processing, is synthesized initially as an inactive proenzyme, which is activated by self-cleavage at a specific serine bond to produce a beta-subunit with a hydroxyl group at its C-terminus and an alpha-subunit with a pyruvoyl group at its N-terminus.

It localises to the cytoplasm. The enzyme catalyses L-aspartate + H(+) = beta-alanine + CO2. It functions in the pathway cofactor biosynthesis; (R)-pantothenate biosynthesis; beta-alanine from L-aspartate: step 1/1. Its function is as follows. Catalyzes the pyruvoyl-dependent decarboxylation of aspartate to produce beta-alanine. This is Aspartate 1-decarboxylase from Clavibacter michiganensis subsp. michiganensis (strain NCPPB 382).